Consider the following 536-residue polypeptide: Inactive phospholipase D5 (536 aa).

The Cytoplasmic portion of the chain corresponds to 1 to 68 (MEIRQHEWLS…DKLEHSQQKC (68 aa)). A helical transmembrane segment spans residues 69-89 (IVIFALVCCFAVLVALIFSAV). The Extracellular portion of the chain corresponds to 90–536 (DIMGEDEDGL…NATGREPLSV (447 aa)). The N-linked (GlcNAc...) asparagine glycan is linked to Asn-121. Positions 215–242 (NKGRLQSSFWIVDKQHVYIGSAGLDWRS) constitute a PLD phosphodiesterase 1 domain. N-linked (GlcNAc...) asparagine glycosylation occurs at Asn-302. One can recognise a PLD phosphodiesterase 2 domain in the interval 434 to 460 (FPKLNRNKYMVTDGAAYIGNFDWVGND). The segment at 503-536 (QPTKQPNCSSLSKLKSPSKQPAMANATGREPLSV) is disordered. Residues 511–521 (SSLSKLKSPSK) show a composition bias toward low complexity.

This sequence belongs to the phospholipase D family.

The protein localises to the membrane. This chain is Inactive phospholipase D5 (Pld5), found in Mus musculus (Mouse).